Consider the following 297-residue polypeptide: Phosphoribosylaminoimidazole-succinocarboxamide synthase (297 aa).

This sequence belongs to the SAICAR synthetase family.

It carries out the reaction 5-amino-1-(5-phospho-D-ribosyl)imidazole-4-carboxylate + L-aspartate + ATP = (2S)-2-[5-amino-1-(5-phospho-beta-D-ribosyl)imidazole-4-carboxamido]succinate + ADP + phosphate + 2 H(+). Its pathway is purine metabolism; IMP biosynthesis via de novo pathway; 5-amino-1-(5-phospho-D-ribosyl)imidazole-4-carboxamide from 5-amino-1-(5-phospho-D-ribosyl)imidazole-4-carboxylate: step 1/2. This Mycobacterium sp. (strain JLS) protein is Phosphoribosylaminoimidazole-succinocarboxamide synthase.